Reading from the N-terminus, the 454-residue chain is Aquaporin-7 (454 aa).

At 1–71 (MNINEPRDGG…LHLHNKTRNH (71 aa)) the chain is on the cytoplasmic side. A helical membrane pass occupies residues 72–92 (FVATVAEFAGTTLFLFFAFSG). Over 93-115 (TQVALLATPANDSNVVGTPSNPA) the chain is Extracellular. An N-linked (GlcNAc...) asparagine glycan is attached at Asn-103. Residues 116 to 136 (QLLYVSLCFGFSLAVNAWVFF) traverse the membrane as a helical segment. The Cytoplasmic segment spans residues 137 to 163 (RISGGLFNPAVTMGMCIVGALPYFRGL). The NPA 1 signature appears at 144–146 (NPA). The helical transmembrane segment at 164 to 184 (LLIFAQIIGGIAAAAIVSALF) threads the bilayer. The Extracellular portion of the chain corresponds to 185 to 202 (PGPITFRTSLGGGTSIVQ). Residues 203 to 223 (GLFIEMFLTAELVFTIFMLAA) traverse the membrane as a helical segment. Residues 224–229 (EKHKGT) lie on the Cytoplasmic side of the membrane. Residues 230–250 (FIAPIGIGLSLFIAELTGVYF) form a helical membrane-spanning segment. The Extracellular portion of the chain corresponds to 251 to 274 (TGGSVNPARSFGPSVVSGQFTGYH). The short motif at 256-258 (NPA) is the NPA 2 element. The chain crosses the membrane as a helical span at residues 275-295 (WIYWVGPILGAILASAFYKFI). Over 296-454 (KMLEYETANP…ENLRDNTHNN (159 aa)) the chain is Cytoplasmic. Positions 343 to 454 (GASHVHENGN…ENLRDNTHNN (112 aa)) are disordered.

The protein belongs to the MIP/aquaporin (TC 1.A.8) family.

It localises to the membrane. It catalyses the reaction H2O(in) = H2O(out). In terms of biological role, water channel required to facilitate the transport of water across membranes. Involved in conidiation. This Botryotinia fuckeliana (strain B05.10) (Noble rot fungus) protein is Aquaporin-7.